The primary structure comprises 112 residues: ATP synthase epsilon chain (112 aa).

Belongs to the ATPase epsilon chain family. As to quaternary structure, F-type ATPases have 2 components, CF(1) - the catalytic core - and CF(0) - the membrane proton channel. CF(1) has five subunits: alpha(3), beta(3), gamma(1), delta(1), epsilon(1). CF(0) has three main subunits: a, b and c.

The protein localises to the cell inner membrane. Functionally, produces ATP from ADP in the presence of a proton gradient across the membrane. In Rickettsia peacockii (strain Rustic), this protein is ATP synthase epsilon chain.